The following is a 486-amino-acid chain: Homoserine O-acetyltransferase (486 aa).

Residues 66–436 enclose the AB hydrolase-1 domain; sequence NVLVICHALT…PEGHDAFLLE (371 aa). Residue Ser-162 is part of the active site. Ser-162 (nucleophile) is an active-site residue. The segment at 248–274 is disordered; the sequence is KFSRRSPSIAQQQKAQKAEVRKPSTVS. The span at 250 to 262 shows a compositional bias: polar residues; it reads SRRSPSIAQQQKA. Catalysis depends on residues Asp-401 and His-430.

Belongs to the AB hydrolase superfamily. MetX family.

It catalyses the reaction L-homoserine + acetyl-CoA = O-acetyl-L-homoserine + CoA. Its pathway is amino-acid biosynthesis; L-methionine biosynthesis via de novo pathway; O-acetyl-L-homoserine from L-homoserine: step 1/1. Functionally, commits homoserine to the methionine biosynthesis pathway by catalyzing its O-acetylation. The chain is Homoserine O-acetyltransferase (MET2) from Saccharomyces pastorianus (Lager yeast).